The primary structure comprises 272 residues: Putative UTP--glucose-1-phosphate uridylyltransferase (272 aa).

The protein belongs to the UDPGP type 2 family.

It carries out the reaction alpha-D-glucose 1-phosphate + UTP + H(+) = UDP-alpha-D-glucose + diphosphate. This Bacillus subtilis (strain 168) protein is Putative UTP--glucose-1-phosphate uridylyltransferase (ytdA).